The following is a 167-amino-acid chain: Zymogen granule membrane protein 16 (167 aa).

The N-terminal stretch at 1 to 16 is a signal peptide; it reads MLAIALLVLLCASASA. The Jacalin-type lectin domain occupies 24–159; that stretch reads SSYSGEYGGK…IDAISLHWDT (136 aa).

It belongs to the jacalin lectin family. Expressed in pancreas, colon, duodenum, and much less in stomach.

It localises to the secreted. Its subcellular location is the extracellular space. The protein resides in the extracellular matrix. It is found in the zymogen granule lumen. The protein localises to the golgi apparatus lumen. Its function is as follows. May play a role in protein trafficking. May act as a linker molecule between the submembranous matrix on the luminal side of zymogen granule membrane (ZGM) and aggregated secretory proteins during granule formation in the TGN. This chain is Zymogen granule membrane protein 16 (Zg16), found in Rattus norvegicus (Rat).